Reading from the N-terminus, the 208-residue chain is Sodium/potassium-transporting ATPase subunit beta-1-interacting protein 4 (208 aa).

3 helical membrane passes run 35-55, 62-82, and 151-171; these read APIL…FGTI, VMVY…IICF, and CLQI…VSVF.

This sequence belongs to the NKAIN family. As to quaternary structure, interacts with ATP1B1.

It localises to the cell membrane. This Homo sapiens (Human) protein is Sodium/potassium-transporting ATPase subunit beta-1-interacting protein 4 (NKAIN4).